Consider the following 231-residue polypeptide: NADH-ubiquinone oxidoreductase chain 4 (231 aa).

Transmembrane regions (helical) follow at residues 1–21 (PIAG…YGII), 34–54 (MFLP…LTCL), 63–85 (IAYS…TPWG), 89–111 (AMAL…NTTY), 118–138 (ILIL…WWLL), and 169–189 (TIIL…HMFL).

This sequence belongs to the complex I subunit 4 family.

Its subcellular location is the mitochondrion membrane. The enzyme catalyses a ubiquinone + NADH + 5 H(+)(in) = a ubiquinol + NAD(+) + 4 H(+)(out). In terms of biological role, core subunit of the mitochondrial membrane respiratory chain NADH dehydrogenase (Complex I) that is believed to belong to the minimal assembly required for catalysis. Complex I functions in the transfer of electrons from NADH to the respiratory chain. The immediate electron acceptor for the enzyme is believed to be ubiquinone. This Trimeresurus cantori (Cantor's pit viper) protein is NADH-ubiquinone oxidoreductase chain 4 (MT-ND4).